Consider the following 61-residue polypeptide: Large ribosomal subunit protein bL32 (61 aa).

Residues 1-16 (MAVPKKKTSKSRKNMR) are compositionally biased toward basic residues. The disordered stretch occupies residues 1-20 (MAVPKKKTSKSRKNMRRAHD).

The protein belongs to the bacterial ribosomal protein bL32 family.

The protein is Large ribosomal subunit protein bL32 of Trichlorobacter lovleyi (strain ATCC BAA-1151 / DSM 17278 / SZ) (Geobacter lovleyi).